Consider the following 404-residue polypeptide: Phospho-N-acetylmuramoyl-pentapeptide-transferase (404 aa).

10 helical membrane-spanning segments follow: residues 30 to 50 (SAAI…IIFF), 73 to 93 (IPTM…LLFA), 100 to 120 (IMLL…DDYI), 132 to 152 (GKFK…TLIF), 209 to 229 (YMWI…SNGA), 242 to 262 (TSAI…NVIF), 274 to 294 (LAEL…FLWY), 301 to 321 (IFMG…LAIV), 326 to 346 (LMIP…IIQV), and 381 to 401 (KIVT…LVTL).

Belongs to the glycosyltransferase 4 family. MraY subfamily. The cofactor is Mg(2+).

Its subcellular location is the cell inner membrane. It carries out the reaction UDP-N-acetyl-alpha-D-muramoyl-L-alanyl-gamma-D-glutamyl-meso-2,6-diaminopimeloyl-D-alanyl-D-alanine + di-trans,octa-cis-undecaprenyl phosphate = di-trans,octa-cis-undecaprenyl diphospho-N-acetyl-alpha-D-muramoyl-L-alanyl-D-glutamyl-meso-2,6-diaminopimeloyl-D-alanyl-D-alanine + UMP. Its pathway is cell wall biogenesis; peptidoglycan biosynthesis. In terms of biological role, catalyzes the initial step of the lipid cycle reactions in the biosynthesis of the cell wall peptidoglycan: transfers peptidoglycan precursor phospho-MurNAc-pentapeptide from UDP-MurNAc-pentapeptide onto the lipid carrier undecaprenyl phosphate, yielding undecaprenyl-pyrophosphoryl-MurNAc-pentapeptide, known as lipid I. The chain is Phospho-N-acetylmuramoyl-pentapeptide-transferase from Amoebophilus asiaticus (strain 5a2).